Here is a 771-residue protein sequence, read N- to C-terminus: Heat shock transcription factor (771 aa).

The interval 1 to 70 (MTTNLYAIAG…GIGISKPGLS (70 aa)) is disordered. Low complexity-rich tracts occupy residues 11-23 (PSKP…TPSP) and 31-42 (LKSLTSLPTNPL). Over residues 43–62 (NPQGTSTSNALTNQSSSTGI) the composition is skewed to polar residues. A DNA-binding region spans residues 78–168 (MKVPAFLNKL…PIELWEFANP (91 aa)). Positions 183–266 (RKNNRLSNSG…PPSHTSAGPL (84 aa)) are disordered. 2 stretches are compositionally biased toward low complexity: residues 189–199 (SNSGVGSSSSL) and 212–233 (SASA…ISQG). Residues 238–262 (NHSTSGKYLITDGTTPGSAPPSHTS) show a composition bias toward polar residues. Residues 280–333 (GIAAIRQTQASIATDLRKLQASNEALWRQAYETQEKQRKHEETIDLIVSFLERL) form an involved in trimerization region. 2 stretches are compositionally biased toward basic and acidic residues: residues 350-372 (RGVG…ARFA) and 399-415 (TGEH…DRLV). 3 disordered regions span residues 350 to 513 (RGVG…SSNA), 590 to 634 (QALT…GSGT), and 708 to 771 (SGVG…SGLK). Residues 418–448 (GSNSEYSIPSVKRTSSSSHPLSLGQLGSSRF) are compositionally biased toward polar residues. Low complexity-rich tracts occupy residues 497 to 511 (LSPL…PSSS) and 599 to 620 (HNPS…SASA).

Belongs to the HSF family. In terms of assembly, homotrimer. Homotrimerization increases the affinity of HSF1 to DNA. Interacts with transcriptional coregulator SSA1 on chromatin. Phosphorylated at high temperature.

The protein localises to the nucleus. In terms of biological role, DNA-binding transcription factor that specifically binds heat shock promoter elements (HSE) and activates transcription. Promotes thermotolerance by transiently regulating a subset of genes. Induces expression of STI, SSA1, SSA2, HSP78 and KAR2 during the heat response. This chain is Heat shock transcription factor, found in Cryptococcus neoformans var. grubii serotype A (strain H99 / ATCC 208821 / CBS 10515 / FGSC 9487) (Filobasidiella neoformans var. grubii).